Here is a 304-residue protein sequence, read N- to C-terminus: Elongation factor Ts (304 aa).

Residues 79 to 82 (TDFV) form an involved in Mg(2+) ion dislocation from EF-Tu region.

It belongs to the EF-Ts family.

The protein localises to the cytoplasm. Its function is as follows. Associates with the EF-Tu.GDP complex and induces the exchange of GDP to GTP. It remains bound to the aminoacyl-tRNA.EF-Tu.GTP complex up to the GTP hydrolysis stage on the ribosome. In Polaromonas sp. (strain JS666 / ATCC BAA-500), this protein is Elongation factor Ts.